The primary structure comprises 487 residues: Photosystem II CP43 reaction center protein (487 aa).

The propeptide occupies 1 to 28 (MKVFVLGWLLKINLMKTLYSQRRFYHVE). The next 5 helical transmembrane spans lie at 83–107 (LFEV…PHLA), 148–169 (LIGP…RDKN), 192–214 (KSLF…RFVS), 269–289 (KPFA…LSYS), and 305–326 (WYNN…ASQA). Glutamate 381 contacts [CaMn4O5] cluster. Residues 461–485 (RARAAAAGFEKGINRENEPVLSMRP) form a helical membrane-spanning segment.

This sequence belongs to the PsbB/PsbC family. PsbC subfamily. In terms of assembly, PSII is composed of 1 copy each of membrane proteins PsbA, PsbB, PsbC, PsbD, PsbE, PsbF, PsbH, PsbI, PsbJ, PsbK, PsbL, PsbM, PsbT, PsbX, PsbY, PsbZ, Psb30/Ycf12, at least 3 peripheral proteins of the oxygen-evolving complex and a large number of cofactors. It forms dimeric complexes. Requires Binds multiple chlorophylls and provides some of the ligands for the Ca-4Mn-5O cluster of the oxygen-evolving complex. It may also provide a ligand for a Cl- that is required for oxygen evolution. PSII binds additional chlorophylls, carotenoids and specific lipids. as cofactor.

Its subcellular location is the plastid. It is found in the chloroplast thylakoid membrane. Functionally, one of the components of the core complex of photosystem II (PSII). It binds chlorophyll and helps catalyze the primary light-induced photochemical processes of PSII. PSII is a light-driven water:plastoquinone oxidoreductase, using light energy to abstract electrons from H(2)O, generating O(2) and a proton gradient subsequently used for ATP formation. The sequence is that of Photosystem II CP43 reaction center protein from Porphyra purpurea (Red seaweed).